The sequence spans 89 residues: UPF0175 protein ssl1255 (89 aa).

Belongs to the UPF0175 family.

The sequence is that of UPF0175 protein ssl1255 from Synechocystis sp. (strain ATCC 27184 / PCC 6803 / Kazusa).